Here is a 461-residue protein sequence, read N- to C-terminus: Cysteine--tRNA ligase (461 aa).

Cys-28 provides a ligand contact to Zn(2+). The 'HIGH' region signature appears at 30–40 (ITVYDLCHIGH). Cys-209, His-234, and Glu-238 together coordinate Zn(2+). Residues 266 to 270 (KMSKS) carry the 'KMSKS' region motif. Lys-269 serves as a coordination point for ATP.

This sequence belongs to the class-I aminoacyl-tRNA synthetase family. In terms of assembly, monomer. Zn(2+) is required as a cofactor.

The protein localises to the cytoplasm. The catalysed reaction is tRNA(Cys) + L-cysteine + ATP = L-cysteinyl-tRNA(Cys) + AMP + diphosphate. The sequence is that of Cysteine--tRNA ligase from Escherichia coli O157:H7.